A 527-amino-acid polypeptide reads, in one-letter code: Catalase (527 aa).

Residue Ala2 is modified to N-acetylalanine. Ser9 carries the post-translational modification Phosphoserine. Position 13 is an N6-succinyllysine (Lys13). Active-site residues include His75 and Asn148. NADP(+)-binding residues include His194, Ser201, Arg203, and Asn213. Residue Lys221 is modified to N6-succinyllysine. Position 233 is an N6-acetyllysine (Lys233). NADP(+) is bound by residues Lys237, Trp303, His305, and Lys306. N6-acetyllysine; alternate is present on Lys306. Lys306 bears the N6-succinyllysine; alternate mark. Tyr358 provides a ligand contact to heme. A phosphoserine mark is found at Ser417 and Ser422. The residue at position 480 (Lys480) is an N6-acetyllysine; alternate. The residue at position 480 (Lys480) is an N6-succinyllysine; alternate. An N6-acetyllysine modification is found at Lys499. Thr511 carries the post-translational modification Phosphothreonine. Phosphoserine is present on residues Ser515 and Ser517. The short motif at 524 to 527 (KANL) is the Microbody targeting signal; atypical element.

It belongs to the catalase family. Homotetramer. Interacts (via microbody targeting signal) with PEX5, monomeric form interacts with PEX5, leading to its translocation into peroxisomes. It depends on heme as a cofactor. NADP(+) serves as cofactor.

Its subcellular location is the peroxisome matrix. It catalyses the reaction 2 H2O2 = O2 + 2 H2O. Catalyzes the degradation of hydrogen peroxide (H(2)O(2)) generated by peroxisomal oxidases to water and oxygen, thereby protecting cells from the toxic effects of hydrogen peroxide. Promotes growth of cells including T-cells, B-cells, myeloid leukemia cells, melanoma cells, mastocytoma cells and normal and transformed fibroblast cells. This chain is Catalase (CAT), found in Pongo abelii (Sumatran orangutan).